Reading from the N-terminus, the 118-residue chain is MNDLKSKSNIKLMKRVLTTYELRKYLKKYFCLTLDNYLVLAYLDVFKNDEGKYFMRDIISYIGIDQSRIVKSVKELSKKGYLNKCRDPHDSRNVIIVVSVKQHNYIKNLLSEININET.

The H-T-H motif DNA-binding region spans 55–78 (MRDIISYIGIDQSRIVKSVKELSK).

The protein belongs to the SarA family.

It localises to the cytoplasm. In terms of biological role, transcriptional regulator acting as an intermediary between major regulators SarA and agr and virulence genes. Represses alpha-hemolysin (hla) gene expression. This chain is HTH-type transcriptional regulator SarT (sarT), found in Staphylococcus aureus (strain Mu50 / ATCC 700699).